A 1064-amino-acid chain; its full sequence is Probable ATP-dependent DNA helicase CHR23 (1064 aa).

A Helicase ATP-binding domain is found at 398 to 563 (VSLYNNDYNG…WSLLNFLLPH (166 aa)). 411–418 (DEMGLGKT) contributes to the ATP binding site. The DEAH box signature appears at 513 to 516 (DEGH). The Helicase C-terminal domain occupies 699-866 (LLDRLLPKLK…DRREMLEEIM (168 aa)). 2 disordered regions span residues 924–955 (AYTS…AVYS) and 967–1064 (MESE…SKRN). Residues 1002–1014 (ESDEEKEEEEEER) are compositionally biased toward acidic residues. A compositionally biased stretch (low complexity) spans 1048-1064 (SSPNSRGKGSSKGSKRN).

The protein belongs to the helicase family. As to expression, expressed in embryos, root apical meristem (RAM) and shoot apical meristem (SAM).

It is found in the nucleus. The catalysed reaction is ATP + H2O = ADP + phosphate + H(+). Probable chromatin-remodeling factor that is functionally redundant with CHR12 in root and shoot stem cell initiation and root apical meristem (RAM) and shoot apical meristem (SAM) maintenance. Can associate with the promoter region of WOX5. May promote seed maturation and repress initiation of germination. May repress plant growth. This is Probable ATP-dependent DNA helicase CHR23 from Arabidopsis thaliana (Mouse-ear cress).